Reading from the N-terminus, the 506-residue chain is L-amino-acid oxidase (506 aa).

The N-terminal stretch at 1-18 (MNVFFTFSLLFLAALGSC) is a signal peptide. A disulfide bridge connects residues Cys-28 and Cys-191. Residue Glu-36 coordinates Zn(2+). FAD contacts are provided by residues 61–62 (MS), Ser-62, 81–82 (EA), Arg-89, and 105–108 (GPMR). Residue Arg-108 participates in substrate binding. Zn(2+)-binding residues include Glu-111, Glu-118, and Glu-150. Asn-190 carries N-linked (GlcNAc...) asparagine glycosylation. Residue Asp-219 coordinates Zn(2+). Position 241 (His-241) interacts with substrate. Glu-248 contributes to the Zn(2+) binding site. Val-279 contacts FAD. Zn(2+) contacts are provided by Glu-299 and His-332. The cysteines at positions 349 and 430 are disulfide-linked. Tyr-390 contacts substrate. Residue His-458 coordinates Zn(2+). Residues Glu-475 and 482–487 (GWIDST) each bind FAD. 482–483 (GW) provides a ligand contact to substrate.

This sequence belongs to the flavin monoamine oxidase family. FIG1 subfamily. Homodimer; non-covalently linked. Stabilized by a single zinc-binding site located at the dimer interface (Asp-219, His-332 and His-458). Other zinc-bind sites can be understood as transient and non-specific, and appear due to the high concentration of zinc ions used in the crystallization experiments. FAD serves as cofactor. In terms of tissue distribution, expressed by the venom gland.

Its subcellular location is the secreted. It catalyses the reaction an L-alpha-amino acid + O2 + H2O = a 2-oxocarboxylate + H2O2 + NH4(+). It carries out the reaction L-leucine + O2 + H2O = 4-methyl-2-oxopentanoate + H2O2 + NH4(+). The enzyme catalyses L-phenylalanine + O2 + H2O = 3-phenylpyruvate + H2O2 + NH4(+). The catalysed reaction is L-tryptophan + O2 + H2O = indole-3-pyruvate + H2O2 + NH4(+). It catalyses the reaction L-methionine + O2 + H2O = 4-methylsulfanyl-2-oxobutanoate + H2O2 + NH4(+). It carries out the reaction L-isoleucine + O2 + H2O = (S)-3-methyl-2-oxopentanoate + H2O2 + NH4(+). The enzyme catalyses L-tyrosine + O2 + H2O = 3-(4-hydroxyphenyl)pyruvate + H2O2 + NH4(+). In terms of biological role, catalyzes an oxidative deamination of predominantly hydrophobic and aromatic L-amino acids, thus producing hydrogen peroxide that may contribute to the diverse toxic effects of this enzyme. Shows high catalytic activity against L-Met, L-Leu, L-Phe, L-Trp, L-Tyr, L-Ile. Shows no or weak activity on L-Cys, L-Val, L-Gln, L-Thr, L-Ser, L-Lys, L-Arg, L-Asn, L-Glu, L-Gly, L-Pro, L-Asp and L-His. Induces platelet aggregation in platelet-rich plasma, probably due to hydrogen peroxide production, since catalase inhibits aggregation effect. Induces moderate mouse paw edema. Induces apoptosis and shows cytotoxicity against several cancer cell lines, which is inhibited by catalase. Shows hemolytic activity and antibacterial activities against both Gram-positive and Gram-negative bacteria. Has parasiticidal activities against both trypanosomes and leishmania, as a result of enzyme-catalyzed hydrogen peroxide production. Unlike other snake venom L-amino acid oxidases, does not induce hemorrhage (with 50 ug of enzyme). This chain is L-amino-acid oxidase, found in Bothrops atrox (Barba amarilla).